We begin with the raw amino-acid sequence, 130 residues long: Small ribosomal subunit protein uS9 (130 aa).

The disordered stretch occupies residues 107-130; sequence DARMKERKKPGLKKARKASQFSKR. Over residues 111–130 the composition is skewed to basic residues; it reads KERKKPGLKKARKASQFSKR.

It belongs to the universal ribosomal protein uS9 family.

This Ligilactobacillus salivarius (strain UCC118) (Lactobacillus salivarius) protein is Small ribosomal subunit protein uS9.